A 351-amino-acid chain; its full sequence is Alcohol dehydrogenase 5 (351 aa).

Residues cysteine 47, histidine 70, cysteine 101, cysteine 104, cysteine 107, cysteine 115, and cysteine 183 each coordinate Zn(2+). Residues 181-187 (GACGGLG), aspartate 205, lysine 210, 272-274 (VGM), and arginine 344 each bind NAD(+).

Belongs to the zinc-containing alcohol dehydrogenase family. It depends on Zn(2+) as a cofactor.

The enzyme catalyses a primary alcohol + NAD(+) = an aldehyde + NADH + H(+). The catalysed reaction is a secondary alcohol + NAD(+) = a ketone + NADH + H(+). The protein is Alcohol dehydrogenase 5 (ADH5) of Saccharomyces pastorianus (Lager yeast).